The following is a 293-amino-acid chain: Lysosomal amino acid transporter 1 homolog (293 aa).

At 1–37 (MVWRTLVASNFSTCPNGSIQWIWDVFGECAQDGWDEA) the chain is on the lumenal side. Residue asparagine 10 is glycosylated (N-linked (GlcNAc...) asparagine). The PQ-loop 1 domain occupies 34–100 (WDEASVALGL…LADQLPLQTY (67 aa)). A helical transmembrane segment spans residues 38 to 58 (SVALGLVSIFCFAASTFPQYI). Residues 59–71 (KACKTGNMDQALS) lie on the Cytoplasmic side of the membrane. Residues 72–92 (LWFLLGWIGGDSCNLIGSFLA) form a helical membrane-spanning segment. The Lumenal portion of the chain corresponds to 93 to 96 (DQLP). A helical transmembrane segment spans residues 97–117 (LQTYTAVYYVLADLLMLTLYF). Residues 118-126 (HYKFKKQPS) are Cytoplasmic-facing. Residues 127–147 (LLSAPINSVLLFILGTVCITP) traverse the membrane as a helical segment. Over 148-182 (LLSSTDPVAVPREGFRGRTLLSVEPGNKPFTKKEV) the chain is Lumenal. A helical membrane pass occupies residues 183–203 (VGFVIGSASSVLYLLSRLPQI). The 53-residue stretch at 191–243 (SSVLYLLSRLPQIRTNFVRQSTQGISYSLFALVMLGNTLYGLSVLLKNPEVGQ) folds into the PQ-loop 2 domain. The Cytoplasmic segment spans residues 204–214 (RTNFVRQSTQG). Residues 215–235 (ISYSLFALVMLGNTLYGLSVL) form a helical membrane-spanning segment. Residues 236-254 (LKNPEVGQSEGSYLLHHLP) are Lumenal-facing. A helical transmembrane segment spans residues 255-275 (WLVGSLGVLLLDTIISIQFLV). Over 276-293 (YRSHDADAASEREPLLPS) the chain is Cytoplasmic. The Di-leucine motif motif lies at 290-291 (LL).

This sequence belongs to the laat-1 family.

Its subcellular location is the lysosome membrane. Its function is as follows. Amino acid transporter that specifically mediates the pH-dependent export of the cationic amino acids arginine, histidine and lysine from lysosomes. This Rattus norvegicus (Rat) protein is Lysosomal amino acid transporter 1 homolog (Slc66a1).